A 1187-amino-acid polypeptide reads, in one-letter code: Protein CHROMATIN REMODELING 8 (1187 aa).

Residues 1 to 55 (MEEDEDQFLLSSLGVTSANPEDLEQKILDEATKKPDNDEGGSVEEKSTQLEGTNL) form a disordered region. Residues 9–19 (LLSSLGVTSAN) show a composition bias toward polar residues. Over residues 23 to 48 (LEQKILDEATKKPDNDEGGSVEEKST) the composition is skewed to basic and acidic residues. A coiled-coil region spans residues 110–170 (LQHALATDRL…LKRKLKEIRK (61 aa)). The Nuclear localization signal 1 signature appears at 162 to 169 (KRKLKEIR). Disordered regions lie at residues 223 to 247 (GFER…DENE) and 273 to 343 (DAED…DGRR). 2 consecutive short sequence motifs (nuclear localization signal) follow at residues 290-297 (LRKLYKTP) and 310-317 (GKKSKKTR). Over residues 305–328 (KKRKAGKKSKKTRPLPEKKWRKRI) the composition is skewed to basic residues. Residues 397–594 (WELHCQRAGG…WSLFDFVFPG (198 aa)) enclose the Helicase ATP-binding domain. 410 to 417 (DEMGLGKT) is an ATP binding site. A disordered region spans residues 467-501 (SAQDSGHGKGQGKASESDYDSESSVDSDHEPKSKN). A compositionally biased stretch (basic and acidic residues) spans 492-501 (DSDHEPKSKN). Residues 545 to 548 (DEGH) carry the DEGH box motif. Residues 730-890 (KVVAEVLKVW…RRFFKARDMK (161 aa)) form the Helicase C-terminal domain. Positions 987–1016 (NANDEEEKMRLEHQASQVAQRAAEALRQSR) form a coiled coil. A compositionally biased stretch (polar residues) spans 1050–1059 (VNSRLTQTGD). Residues 1050–1075 (VNSRLTQTGDKPSAIKNGISAGLSSG) are disordered.

The protein belongs to the SNF2/RAD54 helicase family. As to quaternary structure, homodimer. Binds DNA.

Its subcellular location is the nucleus. Essential factor involved in transcription-coupled nucleotide excision repair (TCR) which allows RNA polymerase II-blocking lesions to be rapidly removed from the transcribed strand of active genes. Upon DNA-binding, it locally modifies DNA conformation by wrapping the DNA around itself, thereby modifying the interface between stalled RNA polymerase II and DNA. It is required for transcription-coupled repair complex formation. This is Protein CHROMATIN REMODELING 8 from Arabidopsis thaliana (Mouse-ear cress).